Consider the following 345-residue polypeptide: Phosphoribosylformylglycinamidine cyclo-ligase (345 aa).

This sequence belongs to the AIR synthase family.

The protein resides in the cytoplasm. The catalysed reaction is 2-formamido-N(1)-(5-O-phospho-beta-D-ribosyl)acetamidine + ATP = 5-amino-1-(5-phospho-beta-D-ribosyl)imidazole + ADP + phosphate + H(+). It functions in the pathway purine metabolism; IMP biosynthesis via de novo pathway; 5-amino-1-(5-phospho-D-ribosyl)imidazole from N(2)-formyl-N(1)-(5-phospho-D-ribosyl)glycinamide: step 2/2. In Ligilactobacillus salivarius (strain UCC118) (Lactobacillus salivarius), this protein is Phosphoribosylformylglycinamidine cyclo-ligase.